The sequence spans 1111 residues: Lysylphosphatidylglycerol biosynthesis bifunctional protein LysX (1111 aa).

Residues 1-612 are phosphatidylglycerol lysyltransferase; the sequence is MTLTSPPRTR…VLHHDGTAPD (612 aa). Helical transmembrane passes span 18–38, 60–80, 84–104, 118–138, 152–172, 209–229, and 308–328; these read VPAA…IASV, FPDT…ALAA, IAWW…VADL, VIGL…RPLF, GVLA…LELF, VNAL…IVLF, and AWLA…ASVG. Positions 613 to 1111 are lysine--tRNA ligase; the sequence is MSGLRTDTAD…TLPFPLARPR (499 aa). The segment at residues 674–747 is a DNA-binding region (OB); the sequence is VAGRVLRIRD…GTRSLLVRHW (74 aa). 2 residues coordinate Mg(2+): Asp1023 and Glu1030.

In the N-terminal section; belongs to the LPG synthetase family. The protein in the C-terminal section; belongs to the class-II aminoacyl-tRNA synthetase family. It depends on Mg(2+) as a cofactor.

It is found in the cell membrane. The catalysed reaction is tRNA(Lys) + L-lysine + ATP = L-lysyl-tRNA(Lys) + AMP + diphosphate. It catalyses the reaction L-lysyl-tRNA(Lys) + a 1,2-diacyl-sn-glycero-3-phospho-(1'-sn-glycerol) = a 1,2-diacyl-sn-glycero-3-phospho-1'-(3'-O-L-lysyl)-sn-glycerol + tRNA(Lys). Its function is as follows. Catalyzes the production of L-lysyl-tRNA(Lys)transfer and the transfer of a lysyl group from L-lysyl-tRNA(Lys) to membrane-bound phosphatidylglycerol (PG), which produces lysylphosphatidylglycerol (LPG), one of the components of the bacterial membrane with a positive net charge. LPG synthesis contributes to the resistance to cationic antimicrobial peptides (CAMPs) and likely protects M.tuberculosis against the CAMPs produced by competiting microorganisms (bacteriocins). In fact, the modification of anionic phosphatidylglycerol with positively charged L-lysine results in repulsion of the peptides. This chain is Lysylphosphatidylglycerol biosynthesis bifunctional protein LysX (lysX), found in Mycobacterium sp. (strain JLS).